The primary structure comprises 229 residues: NAD-dependent protein deacetylase (229 aa).

The Deacetylase sirtuin-type domain occupies 1 to 229 (MNNLKEAIKQ…NDAVKVFAEI (229 aa)). 10 residues coordinate NAD(+): Ala20, Arg32, Gln96, Ile98, Asp99, His114, Thr181, Ser182, Asn205, and Val223. Positions 98 and 99 each coordinate nicotinamide. Catalysis depends on His114, which acts as the Proton acceptor.

This sequence belongs to the sirtuin family. Class U subfamily.

It localises to the cytoplasm. The catalysed reaction is N(6)-acetyl-L-lysyl-[protein] + NAD(+) + H2O = 2''-O-acetyl-ADP-D-ribose + nicotinamide + L-lysyl-[protein]. Functionally, NAD-dependent protein deacetylase which modulates the activities of several enzymes which are inactive in their acetylated form. The chain is NAD-dependent protein deacetylase from Listeria innocua serovar 6a (strain ATCC BAA-680 / CLIP 11262).